Consider the following 274-residue polypeptide: MSNTYQIYLISDSTGETLDRVFLAIKAQFKNIKYDVKSYFFTRTENQVSKIMDEAKKNDNAIILYTIVDTSLAKFLANKGDEKKIPCFSVLGNLIMNFSKLLNQKASHVPSGQHALNEEYYERIEAIQFTMAHDDGNLVEDVDKADLILLGVSRTSKTPTSIYLANRGYKTLNIPLVNEQSIPESLKKNPKLSCVVGLTTEPQRLVDIRKNRMNALKEKENTNYTNINKIEKEINEAKKTFIKYKWPTIDVTRKSVEETAASIIKIYEINKNNG.

Residue 151-158 coordinates ADP; the sequence is GVSRTSKT.

The protein belongs to the pyruvate, phosphate/water dikinase regulatory protein family. PDRP subfamily.

The enzyme catalyses N(tele)-phospho-L-histidyl/L-threonyl-[pyruvate, phosphate dikinase] + ADP = N(tele)-phospho-L-histidyl/O-phospho-L-threonyl-[pyruvate, phosphate dikinase] + AMP + H(+). The catalysed reaction is N(tele)-phospho-L-histidyl/O-phospho-L-threonyl-[pyruvate, phosphate dikinase] + phosphate + H(+) = N(tele)-phospho-L-histidyl/L-threonyl-[pyruvate, phosphate dikinase] + diphosphate. Functionally, bifunctional serine/threonine kinase and phosphorylase involved in the regulation of the pyruvate, phosphate dikinase (PPDK) by catalyzing its phosphorylation/dephosphorylation. This is Putative pyruvate, phosphate dikinase regulatory protein from Pelagibacter ubique (strain HTCC1062).